The sequence spans 448 residues: NADH oxidase (448 aa).

FAD contacts are provided by residues Gly7–Ala11, Cys42, Val80, Ala110–Ala113, and Arg132. Residue Cys42 is the Redox-active of the active site. Residues Val152–Gly167, Glu179, and Gly243 contribute to the NAD(+) site. Residues Thr271–Asp281, Gly299, and Thr300 each bind FAD. Position 328 (Val328) interacts with NAD(+). Tyr423 contributes to the FAD binding site.

This sequence belongs to the class-III pyridine nucleotide-disulfide oxidoreductase family. FAD serves as cofactor.

It carries out the reaction 2 NADH + O2 + 2 H(+) = 2 NAD(+) + 2 H2O. Catalyzes the four-electron reduction of molecular oxygen to water. The chain is NADH oxidase from Methanocaldococcus jannaschii (strain ATCC 43067 / DSM 2661 / JAL-1 / JCM 10045 / NBRC 100440) (Methanococcus jannaschii).